A 375-amino-acid polypeptide reads, in one-letter code: Sperm microtubule associated protein 2 (375 aa).

The interval 1 to 78 (MGELGEHRAS…MAGEELPETS (78 aa)) is disordered. Over residues 59–75 (EPEEEIPPEEMAGEELP) the composition is skewed to acidic residues. THEG repeat units follow at residues 110–129 (AKGR…PKTN), 176–195 (TITV…PKRF), 214–233 (STLE…PKVR), 250–269 (AAQM…PRPP), 282–301 (PKPY…PKAL), 318–337 (VTKN…PKIR), and 352–371 (ASLV…PKYI). Phosphoserine is present on Ser287.

In terms of assembly, interacts with CCT5. In terms of tissue distribution, testis specific (at protein level). Specifically expressed in spermatids; Sertoli cells maintain the level of expression in spermatids. If isolated spermatids are cultivated for 16 hours alone, the expression of THEG is down-regulated. May require signals from Sertoli cells to initiate changes in its gene expression through spermatogenesis.

It localises to the nucleus. Functionally, may be involved (but not essential) in spermatogenesis. This chain is Sperm microtubule associated protein 2, found in Mus musculus (Mouse).